We begin with the raw amino-acid sequence, 174 residues long: Alpha-crystallin B chain (174 aa).

Met-1 carries the post-translational modification N-acetylmethionine. The sHSP domain occupies Arg-55–Glu-163. Residues His-82, His-103, Glu-105, and His-110 each coordinate Zn(2+). Residues Arg-148–Lys-174 are disordered. The segment covering Lys-149 to Pro-166 has biased composition (basic and acidic residues).

This sequence belongs to the small heat shock protein (HSP20) family. Heteromer composed of three CRYAA and one CRYAB subunits. Aggregates with homologous proteins, including the small heat shock protein HSPB1, to form large heteromeric complexes. Inter-subunit bridging via zinc ions enhances stability, which is crucial as there is no protein turn over in the lens. As to expression, lens as well as other tissues.

Its function is as follows. May contribute to the transparency and refractive index of the lens. This is Alpha-crystallin B chain (CRYAB) from Anas platyrhynchos (Mallard).